The sequence spans 81 residues: uncharacterized protein (81 aa).

This is an uncharacterized protein from Homo sapiens (Human).